The following is a 1127-amino-acid chain: Inactive phospholipase C-like protein 2 (1127 aa).

The segment covering 1–11 (MAECGRGGAAG) has biased composition (gly residues). The segment at 1–128 (MAECGRGGAA…KKTVSFSSMP (128 aa)) is disordered. Residue alanine 2 is modified to N-acetylalanine. A Phosphoserine modification is found at serine 17. Positions 19 to 31 (GPALGAKGALKAG) are enriched in low complexity. Over residues 32–42 (VGEGGGGGGRL) the composition is skewed to gly residues. Threonine 84 is modified (phosphothreonine). Positions 141–251 (NSMVEGSELK…WVTGLRYLIS (111 aa)) constitute a PH domain. Positions 426–570 (QDMKQPLSHY…LKGKILIKAK (145 aa)) constitute a PI-PLC X-box domain. At threonine 584 the chain carries Phosphothreonine. The PI-PLC Y-box domain occupies 618-734 (LSELVSICKS…GYVLRPAIMR (117 aa)). In terms of domain architecture, C2 spans 734–863 (REEVSFFSAN…TGYRHVPLQS (130 aa)). The tract at residues 1101–1127 (GTENADVQKPRRSLEVIPEKANDETGE) is disordered. The segment covering 1106–1127 (DVQKPRRSLEVIPEKANDETGE) has biased composition (basic and acidic residues). The residue at position 1113 (serine 1113) is a Phosphoserine.

Its subcellular location is the cytoplasm. Functionally, may play an role in the regulation of Ins(1,4,5)P3 around the endoplasmic reticulum. The polypeptide is Inactive phospholipase C-like protein 2 (PLCL2) (Homo sapiens (Human)).